The primary structure comprises 248 residues: Proteasome subunit alpha type-3 (248 aa).

Belongs to the peptidase T1A family. In terms of assembly, the 26S proteasome consists of a 20S proteasome core and two 19S regulatory subunits. The 20S proteasome core is composed of 28 subunits that are arranged in four stacked rings, resulting in a barrel-shaped structure. The two end rings are each formed by seven alpha subunits, and the two central rings are each formed by seven beta subunits. The catalytic chamber with the active sites is on the inside of the barrel.

Its subcellular location is the cytoplasm. The protein localises to the nucleus. Functionally, the proteasome is a multicatalytic proteinase complex which is characterized by its ability to cleave peptides with Arg, Phe, Tyr, Leu, and Glu adjacent to the leaving group at neutral or slightly basic pH. The proteasome has an ATP-dependent proteolytic activity. This is Proteasome subunit alpha type-3 (psmA3) from Dictyostelium discoideum (Social amoeba).